Consider the following 658-residue polypeptide: uncharacterized protein (658 aa).

Low complexity predominate over residues 516-639; it reads SSNNSNSSNN…NNNNNSSQGG (124 aa). The tract at residues 516-646 is disordered; the sequence is SSNNSNSSNN…QGGNSQGGSG (131 aa).

Its subcellular location is the cytoplasm. This is an uncharacterized protein from Schizosaccharomyces pombe (strain 972 / ATCC 24843) (Fission yeast).